A 459-amino-acid chain; its full sequence is Alcohol acyl transferase 1 allele GSa (459 aa).

Active-site proton acceptor residues include His-164 and Asn-385.

It belongs to the plant acyltransferase family. Highly expressed in the cortex and skin of ripe fruit.

It carries out the reaction butan-1-ol + acetyl-CoA = butyl acetate + CoA. The enzyme catalyses butan-1-ol + butanoyl-CoA = butyl butanoate + CoA. It catalyses the reaction butan-1-ol + hexanoyl-CoA = butyl hexanoate + CoA. The catalysed reaction is hexan-1-ol + butanoyl-CoA = hexyl butanoate + CoA. It carries out the reaction hexan-1-ol + acetyl-CoA = hexyl acetate + CoA. The enzyme catalyses 2-methylbutan-1-ol + butanoyl-CoA = 2-methylbutyl butanoate + CoA. It catalyses the reaction ethanol + butanoyl-CoA = ethyl butanoate + CoA. The catalysed reaction is hexanoyl-CoA + ethanol = ethyl hexanoate + CoA. In terms of biological role, involved in the biosynthesis of volatile esters which confer ripe apple fruit flavor. Alcohol acyl transferase that can use a wide range of alcohols as substrate, including 2-methylbutanol, hexanol and ethanol, to produce esters such as butyl butanoate, butyl hexanoate, hexyl butanoate, ethyl butanoate and ethyl hexanoate and, to some extent, 2-methylbutyl acetate (2MBA), butyl acetate, hexyl acetate and 2-methylbutyl butanoate (2MBB). This is Alcohol acyl transferase 1 allele GSa from Malus domestica (Apple).